The primary structure comprises 193 residues: Probable GTP-binding protein EngB (193 aa).

In terms of domain architecture, EngB-type G spans 22 to 193; the sequence is SFPEIVFAGR…LAHFDQYICQ (172 aa). Residues 30-37, 57-61, 75-78, 142-145, and 172-174 each bind GTP; these read GRSNVGKS, GKTRL, DLPG, TKYD, and YSS. Residues serine 37 and threonine 59 each coordinate Mg(2+).

The protein belongs to the TRAFAC class TrmE-Era-EngA-EngB-Septin-like GTPase superfamily. EngB GTPase family. The cofactor is Mg(2+).

Its function is as follows. Necessary for normal cell division and for the maintenance of normal septation. This chain is Probable GTP-binding protein EngB, found in Pelodictyon phaeoclathratiforme (strain DSM 5477 / BU-1).